The primary structure comprises 129 residues: Follitropin subunit beta (129 aa).

The signal sequence occupies residues 1 to 20 (MKTVQFCFLFCCWKAICCNS). 6 disulfide bridges follow: Cys21/Cys69, Cys35/Cys84, Cys38/Cys122, Cys46/Cys100, Cys50/Cys102, and Cys105/Cys112. N-linked (GlcNAc...) asparagine glycans are attached at residues Asn25 and Asn42.

It belongs to the glycoprotein hormones subunit beta family. As to quaternary structure, heterodimer. The active follitropin is a heterodimer composed of an alpha chain/CGA shared with other hormones and a unique beta chain/FSHB shown here.

Its subcellular location is the secreted. Together with the alpha chain CGA constitutes follitropin, the follicle-stimulating hormone, and provides its biological specificity to the hormone heterodimer. Binds FSHR, a G protein-coupled receptor, on target cells to activate downstream signaling pathways. Follitropin is involved in follicle development and spermatogenesis in reproductive organs. The chain is Follitropin subunit beta (FSHB) from Aotus nancymaae (Ma's night monkey).